A 240-amino-acid chain; its full sequence is MALLLSQPHFSGPLLLLVVSNLLLWEKAASNLPCVAEEGGCWNPLLETFNSATQKAETLHNLADQLYVELYYNQFSSGQFWDFSSQIIRQDKTVVRAGSYCHSSLTNPPNTGVHINIEIASYLKTLINFVGSWISPLFHLVIELSATKDVPETILSKAKEIEENNRQILSDLRWILTKVSPAAEMTEEFPHWEYLSFLKSSDKNNKFLAMFNLSYCIDHDSKYILLQLRLLKCLITGKDC.

The signal sequence occupies residues 1-30 (MALLLSQPHFSGPLLLLVVSNLLLWEKAAS). 3 cysteine pairs are disulfide-bonded: C34–C41, C101–C216, and C233–C240. N212 carries an N-linked (GlcNAc...) asparagine glycan.

Belongs to the somatotropin/prolactin family. Expressed specifically in the spongiotrophoblast and trophoblast giant cells from the junctional zone of the chorioallantoic placenta.

It is found in the secreted. The chain is Prolactin-8A6 (Prl8a6) from Mus musculus (Mouse).